Consider the following 286-residue polypeptide: MANYQNATELSKLTLGKSTQYCSEYTADLLQGVPRSLNRDDLALNQSNLPFVGEDVWYGYELSWLNGKGKPVVAVAEFRFACTSDNIVESKSFKLYLNSFNQTRFSSIKDVEKVLTKDLSKIAGSEASVNLFGVDHCPALDIAKKSDKCICIDGEDISIDNYQYDPQLLATAQDERSGSQIEEYLVSHLLKSNCLITNQPDWASIYIHYRGKAIDHSSLLKYLISFRQHNEFHEQCVERIYCDLQQFCQLDELTIFARYTRRGGLDINPFRSSHIEQAPFARTLRQ.

Position 88–90 (88–90 (VES)) interacts with substrate. 90–91 (SK) contacts NADPH. Cys-194 functions as the Thioimide intermediate in the catalytic mechanism. The active-site Proton donor is Asp-201. 233-234 (HE) provides a ligand contact to substrate. 262–263 (RG) serves as a coordination point for NADPH.

Belongs to the GTP cyclohydrolase I family. QueF type 2 subfamily. Homodimer.

The protein localises to the cytoplasm. The enzyme catalyses 7-aminomethyl-7-carbaguanine + 2 NADP(+) = 7-cyano-7-deazaguanine + 2 NADPH + 3 H(+). It functions in the pathway tRNA modification; tRNA-queuosine biosynthesis. Its function is as follows. Catalyzes the NADPH-dependent reduction of 7-cyano-7-deazaguanine (preQ0) to 7-aminomethyl-7-deazaguanine (preQ1). The protein is NADPH-dependent 7-cyano-7-deazaguanine reductase of Colwellia psychrerythraea (strain 34H / ATCC BAA-681) (Vibrio psychroerythus).